Reading from the N-terminus, the 464-residue chain is Asparagine--tRNA ligase (464 aa).

The protein belongs to the class-II aminoacyl-tRNA synthetase family. In terms of assembly, homodimer.

It is found in the cytoplasm. It carries out the reaction tRNA(Asn) + L-asparagine + ATP = L-asparaginyl-tRNA(Asn) + AMP + diphosphate + H(+). The chain is Asparagine--tRNA ligase from Azobacteroides pseudotrichonymphae genomovar. CFP2.